The primary structure comprises 88 residues: Small ribosomal subunit protein uS15 (88 aa).

The protein belongs to the universal ribosomal protein uS15 family. As to quaternary structure, part of the 30S ribosomal subunit. Forms a bridge to the 50S subunit in the 70S ribosome, contacting the 23S rRNA.

Its function is as follows. One of the primary rRNA binding proteins, it binds directly to 16S rRNA where it helps nucleate assembly of the platform of the 30S subunit by binding and bridging several RNA helices of the 16S rRNA. In terms of biological role, forms an intersubunit bridge (bridge B4) with the 23S rRNA of the 50S subunit in the ribosome. In Geotalea uraniireducens (strain Rf4) (Geobacter uraniireducens), this protein is Small ribosomal subunit protein uS15.